Consider the following 861-residue polypeptide: DNA mismatch repair protein MutS (861 aa).

Residue 618-625 (GPNMGGKS) participates in ATP binding.

The protein belongs to the DNA mismatch repair MutS family.

Its function is as follows. This protein is involved in the repair of mismatches in DNA. It is possible that it carries out the mismatch recognition step. This protein has a weak ATPase activity. This is DNA mismatch repair protein MutS from Shewanella sp. (strain ANA-3).